An 82-amino-acid polypeptide reads, in one-letter code: uncharacterized protein (82 aa).

An N-terminal signal peptide occupies residues 1 to 19; sequence MKNLLKILLIIAFANPVFA.

This is an uncharacterized protein from Rickettsia prowazekii (strain Madrid E).